The chain runs to 94 residues: Small ribosomal subunit protein bS18 (94 aa).

The protein belongs to the bacterial ribosomal protein bS18 family. In terms of assembly, part of the 30S ribosomal subunit. Forms a tight heterodimer with protein bS6.

Binds as a heterodimer with protein bS6 to the central domain of the 16S rRNA, where it helps stabilize the platform of the 30S subunit. The sequence is that of Small ribosomal subunit protein bS18 from Rickettsia bellii (strain OSU 85-389).